We begin with the raw amino-acid sequence, 133 residues long: Type III secretion protein HrcQb (133 aa).

Residues 1–21 (MSTEDLYQDDVEMLDDYEEPV) show a composition bias toward acidic residues. Residues 1–60 (MSTEDLYQDDVEMLDDYEEPVPEQADQQQRDDEYAEHAFGYADSDAEHEEQSGDHHESPM) form a disordered region. Positions 49 to 59 (EEQSGDHHESP) are enriched in basic and acidic residues.

This sequence belongs to the FliN/MopA/SpaO family. Homotetramer. The four monomers assemble into two tightly bound homodimers. Interacts with HrcQa.

The protein resides in the cytoplasm. Functionally, component of the type III secretion system, which is required for effector protein delivery, parasitism, and pathogenicity. Probably participates in the formation of a C-ring-like assembly along with HrcQa. This Pseudomonas syringae pv. syringae protein is Type III secretion protein HrcQb (hrcQb).